A 162-amino-acid polypeptide reads, in one-letter code: Nucleotide-binding protein A2cp1_0112 (162 aa).

It belongs to the YajQ family.

In terms of biological role, nucleotide-binding protein. This chain is Nucleotide-binding protein A2cp1_0112, found in Anaeromyxobacter dehalogenans (strain 2CP-1 / ATCC BAA-258).